The following is a 542-amino-acid chain: Chaperonin GroEL 1 (542 aa).

ATP is bound by residues 29–32 (TLGP), 86–90 (DGTTT), G413, 477–479 (NAA), and D493.

The protein belongs to the chaperonin (HSP60) family. In terms of assembly, forms a cylinder of 14 subunits composed of two heptameric rings stacked back-to-back. Interacts with the co-chaperonin GroES.

Its subcellular location is the cytoplasm. The enzyme catalyses ATP + H2O + a folded polypeptide = ADP + phosphate + an unfolded polypeptide.. In terms of biological role, together with its co-chaperonin GroES, plays an essential role in assisting protein folding. The GroEL-GroES system forms a nano-cage that allows encapsulation of the non-native substrate proteins and provides a physical environment optimized to promote and accelerate protein folding. The chain is Chaperonin GroEL 1 from Renibacterium salmoninarum (strain ATCC 33209 / DSM 20767 / JCM 11484 / NBRC 15589 / NCIMB 2235).